Here is a 571-residue protein sequence, read N- to C-terminus: Hemagglutinin-neuraminidase (571 aa).

Residues 1–26 (MDRAVSRVALENEEREAKNTWRFVFR) lie on the Intravirion side of the membrane. The helical transmembrane segment at 27–47 (IAILLLIVITLAISAAALVYS) threads the bilayer. The Virion surface portion of the chain corresponds to 48–571 (MEASTPGDLV…LVEILKNDGV (524 aa)). Residue N119 is glycosylated (N-linked (GlcNAc...) asparagine; by host). The interval 124–152 (GAPVHDPDYIGGIGKELIVDDASDVTSFY) is important for interaction with fusion/F protein. 3 disulfides stabilise this stretch: C172/C196, C186/C247, and C238/C251. The interval 234–239 (NRKSCS) is involved in neuraminidase activity. 2 N-linked (GlcNAc...) asparagine; by host glycosylation sites follow: N341 and N433. Disulfide bonds link C344-C461 and C455-C465. N-linked (GlcNAc...) asparagine; by host glycosylation is found at N481, N508, and N538.

Belongs to the paramyxoviruses hemagglutinin-neuraminidase family. In terms of assembly, homotetramer; composed of disulfide-linked homodimers. Interacts with F protein trimer. Interacts with host CG-1B; this interaction inhibits viral adsorption and replication rather than internalization.

Its subcellular location is the virion membrane. The protein resides in the host cell membrane. It carries out the reaction Hydrolysis of alpha-(2-&gt;3)-, alpha-(2-&gt;6)-, alpha-(2-&gt;8)- glycosidic linkages of terminal sialic acid residues in oligosaccharides, glycoproteins, glycolipids, colominic acid and synthetic substrates.. Functionally, mediates the viral entry into the host cell together with fusion/F protein. Attaches the virus to sialic acid-containing cell receptors and thereby initiates infection. Binding of HN protein to the receptor induces a conformational change that allows the F protein to trigger virion/cell membranes fusion. Its function is as follows. Neuraminidase activity ensures the efficient spread of the virus by dissociating the mature virions from the neuraminic acid containing glycoproteins. This chain is Hemagglutinin-neuraminidase (HN), found in Gallus gallus (Chicken).